We begin with the raw amino-acid sequence, 215 residues long: Small ribosomal subunit protein uS7 (215 aa).

The protein belongs to the universal ribosomal protein uS7 family. Part of the 30S ribosomal subunit.

Its function is as follows. One of the primary rRNA binding proteins, it binds directly to 16S rRNA where it nucleates assembly of the head domain of the 30S subunit. Is located at the subunit interface close to the decoding center. The protein is Small ribosomal subunit protein uS7 of Thermococcus kodakarensis (strain ATCC BAA-918 / JCM 12380 / KOD1) (Pyrococcus kodakaraensis (strain KOD1)).